Consider the following 101-residue polypeptide: Large ribosomal subunit protein eL21 (101 aa).

A compositionally biased stretch (basic residues) spans M1 to K18. The disordered stretch occupies residues M1–R23.

This sequence belongs to the eukaryotic ribosomal protein eL21 family.

The sequence is that of Large ribosomal subunit protein eL21 from Saccharolobus islandicus (strain Y.G.57.14 / Yellowstone #1) (Sulfolobus islandicus).